Reading from the N-terminus, the 252-residue chain is Isoprenyl transferase (252 aa).

Residue D32 is part of the active site. D32 is a Mg(2+) binding site. Substrate contacts are provided by residues 33-36 (GNGR), W37, R45, H49, and 77-79 (STE). The Proton acceptor role is filled by N80. Substrate is bound by residues W81, R83, R200, and 206–208 (RLS). E219 contacts Mg(2+).

It belongs to the UPP synthase family. In terms of assembly, homodimer. Mg(2+) serves as cofactor.

Functionally, catalyzes the condensation of isopentenyl diphosphate (IPP) with allylic pyrophosphates generating different type of terpenoids. The chain is Isoprenyl transferase from Listeria innocua serovar 6a (strain ATCC BAA-680 / CLIP 11262).